The sequence spans 532 residues: 2-isopropylmalate synthase (532 aa).

In terms of domain architecture, Pyruvate carboxyltransferase spans 5–267 (VIIFDTTLRD…HTNINHQEIY (263 aa)). D14, H202, H204, and N238 together coordinate Mn(2+). The segment at 392–532 (HLDYFSVQSG…SKQQNSQETV (141 aa)) is regulatory domain. Residues 513–532 (QQHNNQQQNDSKQQNSQETV) are disordered.

Belongs to the alpha-IPM synthase/homocitrate synthase family. LeuA type 1 subfamily. As to quaternary structure, homodimer. Requires Mn(2+) as cofactor.

It localises to the cytoplasm. The catalysed reaction is 3-methyl-2-oxobutanoate + acetyl-CoA + H2O = (2S)-2-isopropylmalate + CoA + H(+). Its pathway is amino-acid biosynthesis; L-leucine biosynthesis; L-leucine from 3-methyl-2-oxobutanoate: step 1/4. In terms of biological role, catalyzes the condensation of the acetyl group of acetyl-CoA with 3-methyl-2-oxobutanoate (2-ketoisovalerate) to form 3-carboxy-3-hydroxy-4-methylpentanoate (2-isopropylmalate). This is 2-isopropylmalate synthase from Pectobacterium atrosepticum (strain SCRI 1043 / ATCC BAA-672) (Erwinia carotovora subsp. atroseptica).